Reading from the N-terminus, the 291-residue chain is Phosphate import ATP-binding protein PstB (291 aa).

One can recognise an ABC transporter domain in the interval valine 44 to isoleucine 286. Residue glycine 76–serine 83 coordinates ATP.

Belongs to the ABC transporter superfamily. Phosphate importer (TC 3.A.1.7) family. As to quaternary structure, the complex is composed of two ATP-binding proteins (PstB), two transmembrane proteins (PstC and PstA) and a solute-binding protein (PstS).

It is found in the cell inner membrane. The catalysed reaction is phosphate(out) + ATP + H2O = ADP + 2 phosphate(in) + H(+). Functionally, part of the ABC transporter complex PstSACB involved in phosphate import. Responsible for energy coupling to the transport system. The sequence is that of Phosphate import ATP-binding protein PstB from Chelativorans sp. (strain BNC1).